The following is a 142-amino-acid chain: Putative pre-16S rRNA nuclease (142 aa).

It belongs to the YqgF nuclease family.

It is found in the cytoplasm. Functionally, could be a nuclease involved in processing of the 5'-end of pre-16S rRNA. This is Putative pre-16S rRNA nuclease from Mycoplasmoides gallisepticum (strain R(low / passage 15 / clone 2)) (Mycoplasma gallisepticum).